A 134-amino-acid chain; its full sequence is Cytochrome b (134 aa).

The next 3 helical transmembrane spans lie at Phe-33–Met-53, Trp-77–Val-98, and Trp-113–Leu-133. 2 residues coordinate heme b: His-83 and His-97.

Belongs to the cytochrome b family. As to quaternary structure, the cytochrome bc1 complex contains 11 subunits: 3 respiratory subunits (MT-CYB, CYC1 and UQCRFS1), 2 core proteins (UQCRC1 and UQCRC2) and 6 low-molecular weight proteins (UQCRH/QCR6, UQCRB/QCR7, UQCRQ/QCR8, UQCR10/QCR9, UQCR11/QCR10 and a cleavage product of UQCRFS1). This cytochrome bc1 complex then forms a dimer. Heme b serves as cofactor.

The protein localises to the mitochondrion inner membrane. Its function is as follows. Component of the ubiquinol-cytochrome c reductase complex (complex III or cytochrome b-c1 complex) that is part of the mitochondrial respiratory chain. The b-c1 complex mediates electron transfer from ubiquinol to cytochrome c. Contributes to the generation of a proton gradient across the mitochondrial membrane that is then used for ATP synthesis. The polypeptide is Cytochrome b (MT-CYB) (Sorex shinto sadonis (Sado shrew)).